We begin with the raw amino-acid sequence, 138 residues long: Putative pre-16S rRNA nuclease (138 aa).

It belongs to the YqgF nuclease family.

Its subcellular location is the cytoplasm. Functionally, could be a nuclease involved in processing of the 5'-end of pre-16S rRNA. This chain is Putative pre-16S rRNA nuclease, found in Bacteroides fragilis (strain ATCC 25285 / DSM 2151 / CCUG 4856 / JCM 11019 / LMG 10263 / NCTC 9343 / Onslow / VPI 2553 / EN-2).